The sequence spans 332 residues: Ketol-acid reductoisomerase (NADP(+)) (332 aa).

A KARI N-terminal Rossmann domain is found at 1–182; the sequence is MAQVWKDAEI…GSARAGLIKT (182 aa). Residues 25-28, Lys48, Ser53, and 83-86 contribute to the NADP(+) site; these read YGIQ and DMIQ. His108 is an active-site residue. Gly134 is an NADP(+) binding site. One can recognise a KARI C-terminal knotted domain in the interval 183–329; that stretch reads TFKEEVETDW…RKMRKMMWPD (147 aa). Mg(2+)-binding residues include Asp191, Glu195, Glu227, and Glu231. Residue Ser252 coordinates substrate.

The protein belongs to the ketol-acid reductoisomerase family. Requires Mg(2+) as cofactor.

The enzyme catalyses (2R)-2,3-dihydroxy-3-methylbutanoate + NADP(+) = (2S)-2-acetolactate + NADPH + H(+). It carries out the reaction (2R,3R)-2,3-dihydroxy-3-methylpentanoate + NADP(+) = (S)-2-ethyl-2-hydroxy-3-oxobutanoate + NADPH + H(+). The protein operates within amino-acid biosynthesis; L-isoleucine biosynthesis; L-isoleucine from 2-oxobutanoate: step 2/4. It participates in amino-acid biosynthesis; L-valine biosynthesis; L-valine from pyruvate: step 2/4. Involved in the biosynthesis of branched-chain amino acids (BCAA). Catalyzes an alkyl-migration followed by a ketol-acid reduction of (S)-2-acetolactate (S2AL) to yield (R)-2,3-dihydroxy-isovalerate. In the isomerase reaction, S2AL is rearranged via a Mg-dependent methyl migration to produce 3-hydroxy-3-methyl-2-ketobutyrate (HMKB). In the reductase reaction, this 2-ketoacid undergoes a metal-dependent reduction by NADPH to yield (R)-2,3-dihydroxy-isovalerate. The chain is Ketol-acid reductoisomerase (NADP(+)) from Cenarchaeum symbiosum (strain A).